The chain runs to 182 residues: MRWLDKFGESLSRSVAHKTSRRSVLRSVGKLMVGSAFVLPVLPVARAAGGGGSSSGADHISLNPDLANEDEVNSCDYWRHCAVDGFLCSCCGGTTTTCPPGSTPSPISWIGTCHNPHDGKDYLISYHDCCGKTACGRCQCNTQTRERPGYEFFLHNDVNWCMANENSTFHCTTSVLVGLAKN.

A signal peptide (tat-type signal) is located at residues 1–47; that stretch reads MRWLDKFGESLSRSVAHKTSRRSVLRSVGKLMVGSAFVLPVLPVARA. Disulfide bonds link C75/C140, C81/C113, C88/C171, C90/C138, C91/C135, C98/C129, and C130/C161. Position 84 (D84) interacts with substrate. The active-site Tryptophylquinone 6'-substrate hemiaminal intermediate is W109. A Tryptophylquinone modification is found at W109. The segment at residues 109–160 is a cross-link (tryptophan tryptophylquinone (Trp-Trp)); it reads WIGTCHNPHDGKDYLISYHDCCGKTACGRCQCNTQTRERPGYEFFLHNDVNW. Catalysis depends on D128, which acts as the Proton acceptor. 156–158 is a binding site for substrate; that stretch reads NDV.

This sequence belongs to the aromatic amine dehydrogenase light chain family. As to quaternary structure, heterotetramer of two light and two heavy chains. Binds two azurin molecules per heterotetramer. The cofactor is tryptophan tryptophylquinone residue. In terms of processing, tryptophan tryptophylquinone (TTQ) is formed by oxidation of the indole ring of a tryptophan to form tryptophylquinone followed by covalent cross-linking with another tryptophan residue. Post-translationally, predicted to be exported by the Tat system. The position of the signal peptide cleavage has been experimentally proven.

It localises to the periplasm. The enzyme catalyses an aralkylamine + 2 oxidized [azurin] + H2O = an aromatic aldehyde + 2 reduced [azurin] + NH4(+) + 2 H(+). Irreversibly inhibited by phenylhydrazine, hydroxylamine, semicarbazide, hydrazine and aminoguanidine. Reversibly inhibited by isonicotinic acid hydrazide (isoniazid) and isonicotinic acid 2-isopropyl hydrazide (iproniazid). Its function is as follows. Oxidizes primary aromatic amines and, more slowly, some long-chain aliphatic amines, but not methylamine or ethylamine. Uses azurin as an electron acceptor to transfer electrons from the reduced tryptophylquinone cofactor. This Alcaligenes faecalis protein is Aralkylamine dehydrogenase light chain.